The sequence spans 232 residues: Ubiquinone biosynthesis O-methyltransferase (232 aa).

4 residues coordinate S-adenosyl-L-methionine: arginine 36, glycine 55, aspartate 76, and leucine 120.

It belongs to the methyltransferase superfamily. UbiG/COQ3 family.

The enzyme catalyses a 3-demethylubiquinol + S-adenosyl-L-methionine = a ubiquinol + S-adenosyl-L-homocysteine + H(+). The catalysed reaction is a 3-(all-trans-polyprenyl)benzene-1,2-diol + S-adenosyl-L-methionine = a 2-methoxy-6-(all-trans-polyprenyl)phenol + S-adenosyl-L-homocysteine + H(+). It participates in cofactor biosynthesis; ubiquinone biosynthesis. In terms of biological role, O-methyltransferase that catalyzes the 2 O-methylation steps in the ubiquinone biosynthetic pathway. In Pseudomonas entomophila (strain L48), this protein is Ubiquinone biosynthesis O-methyltransferase.